Consider the following 446-residue polypeptide: Inward rectifier potassium channel 4 (446 aa).

Residues 1–55 are Cytoplasmic-facing; sequence MHGHSRNGQAHVPRRKRRNRFVKKNGQCNVYFANLSNKSQRYMADIFTTCVDTRW. A helical transmembrane segment spans residues 56-80; that stretch reads RYMLMIFSAAFLVSWLFFGLLFWCI. The Extracellular portion of the chain corresponds to 81–120; that stretch reads AFFHGDLEPSPSGPTAGGPGGNGGGAAPTAAKPCIMHVNG. The val/Gly/Ala/Pro stretch stretch occupies residues 91–111; sequence PSGPTAGGPGGNGGGAAPTAA. Positions 121 to 132 form an intramembrane region, helical; Pore-forming; that stretch reads FLGAFLFSVETQ. Residues 133-139 constitute an intramembrane region (pore-forming); the sequence is TTIGYGF. The Selectivity filter signature appears at 134–139; it reads TIGYGF. Over 140 to 148 the chain is Extracellular; sequence RCVTEECPL. Residues 149–170 form a helical membrane-spanning segment; sequence AVIAVVVQSIVGCVIDSFMIGT. Topologically, residues 171-446 are cytoplasmic; that stretch reads IMAKMPRPKK…NISYRRESAI (276 aa). The short motif at 444–446 is the PDZ-binding element; sequence SAI.

This sequence belongs to the inward rectifier-type potassium channel (TC 1.A.2.1) family. KCNJ4 subfamily. In terms of assembly, homomultimeric and heteromultimeric association with KCNJ2 and KCNJ12. Interacts with DLG2 and DLG4. Associates, via its PDZ-recognition domain, with a complex containing LIN7A, LIN7B, LIN7C, DLG1, CASK and APBA1. Interacts with TAX1BP3. TAX1BP3 competes with LIN7 family members for KCNJ4 binding. Detected in kidney distal convoluted tubules (at protein level). Widely expressed throughout the brain. Also found in some peripheral tissues.

It is found in the cell membrane. Its subcellular location is the cytoplasmic vesicle membrane. The protein resides in the postsynaptic cell membrane. The enzyme catalyses K(+)(in) = K(+)(out). In terms of biological role, inward rectifier potassium channels are characterized by a greater tendency to allow potassium to flow into the cell rather than out of it. Their voltage dependence is regulated by the concentration of extracellular potassium; as external potassium is raised, the voltage range of the channel opening shifts to more positive voltages. The inward rectification is mainly due to the blockage of outward current by internal magnesium. Can be blocked by extracellular barium and cesium. This Rattus norvegicus (Rat) protein is Inward rectifier potassium channel 4 (Kcnj4).